The chain runs to 375 residues: Succinyl-diaminopimelate desuccinylase (375 aa).

H66 serves as a coordination point for Zn(2+). D68 is an active-site residue. D99 contributes to the Zn(2+) binding site. E133 acts as the Proton acceptor in catalysis. The Zn(2+) site is built by E134, E162, and H348.

This sequence belongs to the peptidase M20A family. DapE subfamily. In terms of assembly, homodimer. Zn(2+) serves as cofactor. Requires Co(2+) as cofactor.

The enzyme catalyses N-succinyl-(2S,6S)-2,6-diaminopimelate + H2O = (2S,6S)-2,6-diaminopimelate + succinate. Its pathway is amino-acid biosynthesis; L-lysine biosynthesis via DAP pathway; LL-2,6-diaminopimelate from (S)-tetrahydrodipicolinate (succinylase route): step 3/3. Functionally, catalyzes the hydrolysis of N-succinyl-L,L-diaminopimelic acid (SDAP), forming succinate and LL-2,6-diaminopimelate (DAP), an intermediate involved in the bacterial biosynthesis of lysine and meso-diaminopimelic acid, an essential component of bacterial cell walls. This chain is Succinyl-diaminopimelate desuccinylase, found in Stenotrophomonas maltophilia (strain K279a).